Here is a 244-residue protein sequence, read N- to C-terminus: 7-cyano-7-deazaguanine synthase (244 aa).

Residue 17–27 (FSGGQDSTTCL) participates in ATP binding. C205, C220, C223, and C226 together coordinate Zn(2+).

It belongs to the QueC family. It depends on Zn(2+) as a cofactor.

The enzyme catalyses 7-carboxy-7-deazaguanine + NH4(+) + ATP = 7-cyano-7-deazaguanine + ADP + phosphate + H2O + H(+). Its pathway is purine metabolism; 7-cyano-7-deazaguanine biosynthesis. In terms of biological role, catalyzes the ATP-dependent conversion of 7-carboxy-7-deazaguanine (CDG) to 7-cyano-7-deazaguanine (preQ(0)). This is 7-cyano-7-deazaguanine synthase from Bordetella parapertussis (strain 12822 / ATCC BAA-587 / NCTC 13253).